Consider the following 304-residue polypeptide: MARTHDDKWDLASSVGATATMVAAGRAMASRDPRGLIDDPFAEPLVRAVGVDFFIKMMDGEFDLSVLQNVSSAKAQAMVDGMAVRTKYFDDYFGDAIKSGIRQAVILASGLDARAYRLPWPADTVVYELDQPQVIEFKTNVLADLGAEPRATRRAIPIDLRGDWPVALRAAGLDTTAPTAWLAEGLLIYLPPEAQDRLFDNITALSAPGSTVATEFVPGIVDFDVDRARQMSGPFRDHGLDIDMSSLVYTGARNHVVDYLRAKGWDAEGVTRSELFERNGMAVPAPSDDDPLGEIIFISAALTG.

Residues Asp-130 and 159–160 (DL) each bind S-adenosyl-L-methionine.

This sequence belongs to the UPF0677 family.

Its function is as follows. Exhibits S-adenosyl-L-methionine-dependent methyltransferase activity. This chain is Putative S-adenosyl-L-methionine-dependent methyltransferase MMAR_1057, found in Mycobacterium marinum (strain ATCC BAA-535 / M).